Reading from the N-terminus, the 235-residue chain is Probable ribosomal RNA small subunit methyltransferase A (235 aa).

S-adenosyl-L-methionine is bound by residues His9, Leu11, Gly34, Glu55, Asp78, and Asn93.

Belongs to the class I-like SAM-binding methyltransferase superfamily. rRNA adenine N(6)-methyltransferase family. RsmA subfamily.

The protein localises to the cytoplasm. Its function is as follows. Specifically dimethylates two adjacent adenosines in the loop of a conserved hairpin near the 3'-end of 16S rRNA in the 30S particle. May play a critical role in biogenesis of 30S subunits. The polypeptide is Probable ribosomal RNA small subunit methyltransferase A (Pyrobaculum islandicum (strain DSM 4184 / JCM 9189 / GEO3)).